Here is a 549-residue protein sequence, read N- to C-terminus: Glucose-6-phosphate isomerase 1 (549 aa).

E358 serves as the catalytic Proton donor. Active-site residues include H389 and K513.

Belongs to the GPI family.

Its subcellular location is the cytoplasm. The enzyme catalyses alpha-D-glucose 6-phosphate = beta-D-fructose 6-phosphate. The protein operates within carbohydrate biosynthesis; gluconeogenesis. It participates in carbohydrate degradation; glycolysis; D-glyceraldehyde 3-phosphate and glycerone phosphate from D-glucose: step 2/4. Functionally, catalyzes the reversible isomerization of glucose-6-phosphate to fructose-6-phosphate. The sequence is that of Glucose-6-phosphate isomerase 1 from Streptomyces avermitilis (strain ATCC 31267 / DSM 46492 / JCM 5070 / NBRC 14893 / NCIMB 12804 / NRRL 8165 / MA-4680).